A 160-amino-acid chain; its full sequence is Ubiquitin-like protein ATG12 (160 aa).

Residues 1 to 40 (MSETPKDQGPSSPSPSPSPSAASPMPLADNEVAGSGASSP) are disordered. Residue Gly-160 forms a Glycyl lysine isopeptide (Gly-Lys) (interchain with K-102 in ATG5) linkage.

Belongs to the ATG12 family. As to quaternary structure, forms a conjugate with ATG5. Forms a thioester bond with the 'Cys-196' of ATG10. Interacts with the ATG7 C-terminal 40 amino acids domain. The ATG12-ATG5 conjugate forms a complex with several units of ATG16. The ATG12-ATG5 conjugate also associates with ATG3.

The protein resides in the preautophagosomal structure membrane. Functionally, ubiquitin-like protein involved in cytoplasm to vacuole transport (Cvt), autophagy vesicles formation, mitophagy, and nucleophagy. Conjugation with ATG5 through a ubiquitin-like conjugating system involving also ATG7 as an E1-like activating enzyme and ATG10 as an E2-like conjugating enzyme, is essential for its function. The ATG12-ATG5 conjugate acts as an E3-like enzyme which is required for lipidation of ATG8 and ATG8 association to the vesicle membranes. ATG12-ATG5 rearranges the ATG3 catalytic center and enhances its E2 activity. Autophagy is required for proper vegetative growth, asexual/sexual reproduction, and full virulence. Autophagy is particularly involved in the biosynthesis of deoxynivalenol (DON), an important virulence determinant. The protein is Ubiquitin-like protein ATG12 of Gibberella zeae (strain ATCC MYA-4620 / CBS 123657 / FGSC 9075 / NRRL 31084 / PH-1) (Wheat head blight fungus).